A 526-amino-acid chain; its full sequence is Ribonuclease Y (526 aa).

Residues Ile-10–Ile-30 form a helical membrane-spanning segment. A KH domain is found at Thr-216 to Leu-279. The 94-residue stretch at Val-342–Ala-435 folds into the HD domain.

This sequence belongs to the RNase Y family.

The protein resides in the cell membrane. Its function is as follows. Endoribonuclease that initiates mRNA decay. This is Ribonuclease Y from Acholeplasma laidlawii (strain PG-8A).